A 323-amino-acid polypeptide reads, in one-letter code: MAIDIFNPQVSVVAKGLEGKVITIYGSNNLGKTKQSTRMKKPLYLPFEKGLNAIAGVQFMPINSWADFKKVNKQLTKNAEKAKEMYQTIIVDEVDAFAKYATRYVCEQYDVERIKDGNDGFGLWKEYETEVWEEINKLIGVGFTVIFIAHAAEDKKGKVYPKGDKRVLAPVIDNSDIVLYLSSNGVDEDRKVIKSSAWLAETEEHFARSRFDYIDTYLPEFTAENLEKAIIEAVERQEQAEGIVAVTYEEQKQNNASEELDFNSLMDQIKEIGMKLNEEGRLEEVNEITEKHLGKGVKVTECSRKQVGVMSVILDDLKDLLAE.

A coiled-coil region spans residues 222–272 (TAENLEKAIIEAVERQEQAEGIVAVTYEEQKQNNASEELDFNSLMDQIKEI).

This Bacillus subtilis (strain 168) protein is SPbeta prophage-derived uncharacterized protein YorG (yorG).